The primary structure comprises 376 residues: Rhodopsin (376 aa).

The Extracellular segment spans residues 1 to 52; sequence MSSWSNQPAMDDYGLPSSNPYGNFTVVDMAPKDILHMIHPHWYQYPPMNPMM. N-linked (GlcNAc...) asparagine glycosylation is present at N23. Residues 53–77 traverse the membrane as a helical segment; that stretch reads YPLLLIFMLFTGILCLAGNFVTIWV. The Cytoplasmic segment spans residues 78 to 89; sequence FMNTKSLRTPAN. The chain crosses the membrane as a helical span at residues 90-112; the sequence is LLVVNLAMSDFLMMFTMFPPMMV. The Extracellular portion of the chain corresponds to 113-126; it reads TCYYHTWTLGPTFC. C126 and C203 are disulfide-bonded. A helical transmembrane segment spans residues 127-149; sequence QVYAFLGNLCGCASIWTMVFITF. A 'Ionic lock' involved in activated form stabilization motif is present at residues 150–152; it reads DRY. The Cytoplasmic segment spans residues 150 to 168; sequence DRYNVIVKGVAGEPLSTKK. Residues 169 to 189 traverse the membrane as a helical segment; sequence ASLWILTIWVLSITWCIAPFF. The Extracellular segment spans residues 190 to 216; sequence GWNRYVPEGNLTGCGTDYLSEDILSRS. N199 carries N-linked (GlcNAc...) asparagine glycosylation. A helical membrane pass occupies residues 217–237; the sequence is YLYDYSTWVYYLPLLPIYCYV. The Cytoplasmic segment spans residues 238–278; it reads SIIKAVAAHEKGMRDQAKKMGIKSLRNEEAQKTSAECRLAK. A helical transmembrane segment spans residues 279-300; it reads IAMTTVALWFIAWTPYLLINWV. The Extracellular segment spans residues 301–311; it reads GMFARSYLSPV. A helical transmembrane segment spans residues 312 to 333; it reads YTIWGYVFAKANAVYNPIVYAI. At K321 the chain carries N6-(retinylidene)lysine. Topologically, residues 334-376 are cytoplasmic; the sequence is SHPKYRAAMEKKLPCLSCKTESDDVSESASTTTSSAEEKAESA. The disordered stretch occupies residues 353 to 376; it reads TESDDVSESASTTTSSAEEKAESA.

This sequence belongs to the G-protein coupled receptor 1 family. Opsin subfamily. Homodimer. Interacts with GNAQ. In terms of processing, contains one covalently linked retinal chromophore. As to expression, detected on rhabdomere membranes on photoreceptor cells in the retina (at protein level).

The protein resides in the cell projection. The protein localises to the rhabdomere membrane. Photoreceptor required for image-forming vision at low light intensity. Can use both retinal and 3-dehydroretinal as visual pigment. Light-induced isomerization of 11-cis to all-trans retinal triggers a conformational change that activates signaling via G-proteins. Signaling via GNAQ probably mediates the activation of phospholipase C. The sequence is that of Rhodopsin (RHO) from Procambarus clarkii (Red swamp crayfish).